The primary structure comprises 459 residues: Exodeoxyribonuclease 7 large subunit (459 aa).

The protein belongs to the XseA family. In terms of assembly, heterooligomer composed of large and small subunits.

The protein resides in the cytoplasm. It carries out the reaction Exonucleolytic cleavage in either 5'- to 3'- or 3'- to 5'-direction to yield nucleoside 5'-phosphates.. Functionally, bidirectionally degrades single-stranded DNA into large acid-insoluble oligonucleotides, which are then degraded further into small acid-soluble oligonucleotides. This chain is Exodeoxyribonuclease 7 large subunit, found in Yersinia pseudotuberculosis serotype O:3 (strain YPIII).